The chain runs to 1873 residues: Voltage-dependent L-type calcium channel subunit alpha-1S (1873 aa).

Residues 1–23 (MEPSSPQDEGLRKKQPKKPLPEV) are disordered. The Cytoplasmic segment spans residues 1-51 (MEPSSPQDEGLRKKQPKKPLPEVLPRPPRALFCLTLQNPLRKACISIVEWK). The stretch at 38-337 (NPLRKACISI…LVLGVLSGEF (300 aa)) is one I repeat. A helical membrane pass occupies residues 52–70 (PFETIILLTIFANCVALAV). Topologically, residues 71 to 85 (YLPMPEDDNNSLNLG) are extracellular. A glycan (N-linked (GlcNAc...) asparagine) is linked at N79. The helical transmembrane segment at 86 to 106 (LEKLEYFFLTVFSIEAAMKII) threads the bilayer. Residues 107-115 (AYGFLFHQD) are Cytoplasmic-facing. Residues 116 to 136 (AYLRSGWNVLDFIIVFLGVFT) traverse the membrane as a helical segment. Residues 137-160 (AILEQVNVIQSNTAPMSSKGAGLD) lie on the Extracellular side of the membrane. Residues 161–179 (VKALRAFRVLRPLRLVSGV) traverse the membrane as a helical segment. Topologically, residues 180–196 (PSLQVVLNSIFKAMLPL) are cytoplasmic. Residues 197 to 218 (FHIALLVLFMVIIYAIIGLELF) form a helical membrane-spanning segment. Residues 219-279 (KGKMHKTCYY…HGITHFDNFG (61 aa)) lie on the Extracellular side of the membrane. 2 disulfide bridges follow: C226–C254 and C245–C261. An N-linked (GlcNAc...) asparagine glycan is attached at N257. Positions 280 to 301 (FSMLTVYQCITMEGWTDVLYWV) form an intramembrane region, pore-forming. The Selectivity filter of repeat I motif lies at 290 to 293 (TMEG). E292 is a Ca(2+) binding site. At 302–309 (NDAIGNEW) the chain is on the extracellular side. A helical transmembrane segment spans residues 310-330 (PWIYFVTLILLGSFFILNLVL). Residues 331 to 432 (GVLSGEFTKE…WKCHDLVKSR (102 aa)) lie on the Cytoplasmic side of the membrane. The tract at residues 357 to 374 (QQLEEDLRGYMSWITQGE) is binding to the beta subunit. 2 positions are modified to phosphoserine: S393 and S397. The II repeat unit spans residues 418–664 (NRVFRWKCHD…VFLAIAVDNL (247 aa)). The chain crosses the membrane as a helical span at residues 433-451 (VFYWLVILIVALNTLSIAS). The Extracellular segment spans residues 452 to 462 (EHHNQPLWLTH). The helical transmembrane segment at 463 to 483 (LQDIANRVLLSLFTIEMLLKM) threads the bilayer. Residues 484–494 (YGLGLRQYFMS) are Cytoplasmic-facing. A helical membrane pass occupies residues 495 to 514 (IFNRFDCFVVCSGILELLLV). Topologically, residues 515–523 (ESGAMTPLG) are extracellular. The chain crosses the membrane as a helical span at residues 524–542 (ISVLRCIRLLRLFKITKYW). The Cytoplasmic segment spans residues 543 to 561 (TSLSNLVASLLNSIRSIAS). The helical transmembrane segment at 562–581 (LLLLLFLFIIIFALLGMQLF) threads the bilayer. At 582–601 (GGRYDFEDTEVRRSNFDNFP) the chain is on the extracellular side. Positions 602-623 (QALISVFQVLTGEDWNSVMYNG) form an intramembrane region, pore-forming. The Selectivity filter of repeat II motif lies at 612–615 (TGED). Residue E614 participates in Ca(2+) binding. The Extracellular portion of the chain corresponds to 624–633 (IMAYGGPSYP). Residues 634–653 (GVLVCIYFIILFVCGNYILL) form a helical membrane-spanning segment. Residues 654–799 (NVFLAIAVDN…VLCHRIVNAT (146 aa)) are Cytoplasmic-facing. 2 disordered regions span residues 673-717 (AQKA…IPTT) and 731-757 (EVKD…VSPR). S687 carries the post-translational modification Phosphoserine; by PKA. Over residues 690–711 (LPDKTEEEKSVMAKKLEQKPKG) the composition is skewed to basic and acidic residues. The span at 742–751 (PGDDEEDEPE) shows a compositional bias: acidic residues. Residues 747–760 (EDEPEIPVSPRPRP) are interaction with STAC, STAC2 and STAC3 (via SH3 domains). The stretch at 786–1068 (NKVRVLCHRI…IFVGFVIVTF (283 aa)) is one III repeat. The chain crosses the membrane as a helical span at residues 800-818 (WFTNFILLFILLSSAALAA). At 819-830 (EDPIRAESVRNQ) the chain is on the extracellular side. Residues 831–850 (ILGYFDIAFTSVFTVEIVLK) form a helical membrane-spanning segment. Over 851–866 (MTTYGAFLHKGSFCRN) the chain is Cytoplasmic. A helical transmembrane segment spans residues 867-885 (YFNILDLLVVAVSLISMGL). Residues 886 to 892 (ESSTISV) are Extracellular-facing. Residues 893 to 911 (VKILRVLRVLRPLRAINRA) traverse the membrane as a helical segment. At 912-930 (KGLKHVVQCVFVAIRTIGN) the chain is on the cytoplasmic side. A helical transmembrane segment spans residues 931-950 (IVLVTTLLQFMFACIGVQLF). Topologically, residues 951–1000 (KGKFFSCNDLSKMTEEECRGYYYVYKDGDPTQMELRPRQWIHNDFHFDNV) are extracellular. An intrachain disulfide couples C957 to C968. A dihydropyridine binding region spans residues 988 to 1077 (RQWIHNDFHF…FQEQGETEYK (90 aa)). The segment at residues 1001–1021 (LSAMMSLFTVSTFEGWPQLLY) is an intramembrane region (pore-forming). The short motif at 1012 to 1015 (TFEG) is the Selectivity filter of repeat III element. E1014 provides a ligand contact to Ca(2+). Residues 1022 to 1038 (RAIDSNEEDMGPVYNNR) are Extracellular-facing. A helical membrane pass occupies residues 1039–1060 (VEMAIFFIIYIILIAFFMMNIF). The Cytoplasmic segment spans residues 1061–1118 (VGFVIVTFQEQGETEYKNCELDKNQRQCVQYALKARPLRCYIPKNPYQYQVWYVVTSS). The IV repeat unit spans residues 1105-1384 (NPYQYQVWYV…LFVAVIMDNF (280 aa)). A helical membrane pass occupies residues 1119 to 1140 (YFEYLMFALIMLNTICLGMQHY). Residues 1141–1148 (HQSEEMNH) lie on the Extracellular side of the membrane. The chain crosses the membrane as a helical span at residues 1149 to 1170 (ISDILNVAFTIIFTLEMILKLL). The Cytoplasmic segment spans residues 1171 to 1180 (AFKARGYFGD). Residues 1181–1200 (PWNVFDFLIVIGSIIDVILS) traverse the membrane as a helical segment. Topologically, residues 1201–1231 (EIDTFLASSGGLYCLGGGCGNVDPDESARIS) are extracellular. Residues 1232–1250 (SAFFRLFRVMRLIKLLSRA) traverse the membrane as a helical segment. Topologically, residues 1251–1268 (EGVRTLLWTFIKSFQALP) are cytoplasmic. Residues 1269 to 1289 (YVALLIVMLFFIYAVIGMQMF) form a helical membrane-spanning segment. Over 1290-1311 (GKIALVDGTQINRNNNFQTFPQ) the chain is Extracellular. An intramembrane region (pore-forming) is located at residues 1312 to 1330 (AVLLLFRCATGEAWQEILL). A Selectivity filter of repeat IV motif is present at residues 1321–1324 (TGEA). Over 1331–1356 (ACSYGKLCDPESDYAPGEEYTCGTNF) the chain is Extracellular. The dihydropyridine binding stretch occupies residues 1337–1403 (LCDPESDYAP…LGPHHLDEFK (67 aa)). A disulfide bridge connects residues C1338 and C1352. Residues 1349 to 1391 (EYTCGTNFAYYYFISFYMLCAFLIINLFVAVIMDNFDYLTRDW) form a phenylalkylamine binding region. The chain crosses the membrane as a helical span at residues 1357–1381 (AYYYFISFYMLCAFLIINLFVAVIM). The Cytoplasmic portion of the chain corresponds to 1382 to 1873 (DNFDYLTRDW…SQETLIPPRP (492 aa)). The interaction with calmodulin stretch occupies residues 1522 to 1542 (KFYATFLIQEHFRKFMKRQEE). Residue S1575 is modified to Phosphoserine; by PKA and CAMK2. A Phosphothreonine; by CK2 modification is found at T1579. S1617 is subject to Phosphoserine; by PKA. Disordered stretches follow at residues 1689-1782 (EFPG…RPAP) and 1841-1873 (GMAS…PPRP). A compositionally biased stretch (low complexity) spans 1847-1858 (GSLSRRSSLGSL).

The protein belongs to the calcium channel alpha-1 subunit (TC 1.A.1.11) family. CACNA1S subfamily. Component of a calcium channel complex consisting of a pore-forming alpha subunit (CACNA1S) and the ancillary subunits CACNB1 or CACNB2, CACNG1 and CACNA2D1. The channel complex contains alpha, beta, gamma and delta subunits in a 1:1:1:1 ratio, i.e. it contains either CACNB1 or CACNB2. CACNA1S channel activity is modulated by the auxiliary subunits (CACNB1 or CACNB2, CACNG1 and CACNA2D1). Interacts with DYSF and JSRP1. Interacts with RYR1. Interacts with STAC, STAC2 and STAC3 (via their SH3 domains). Interaction with STAC3 promotes expression at the cell membrane. Interaction with STAC2 promotes expression at the cell membrane, but with much lower efficiency than STAC3. Interaction with STAC1 leads to very low levels expression at the cell membrane, much less than the levels observed upon interaction with STAC3 and STAC2. Interacts with CALM. The alpha-1S subunit is found in two isoforms in the skeletal muscle: a minor form of 212 kDa containing the complete amino acid sequence, and a major form of 190 kDa derived from the full-length form by post-translational proteolysis close to Phe-1690. In terms of processing, phosphorylated. Phosphorylation by PKA activates the calcium channel. Both the minor and major forms are phosphorylated in vitro by PKA. Phosphorylation at Ser-1575 is involved in beta-adrenergic-mediated regulation of the channel. As to expression, detected in skeletal muscle T-tubules (at protein level).

Its subcellular location is the cell membrane. It is found in the sarcolemma. It localises to the T-tubule. The enzyme catalyses Ca(2+)(in) = Ca(2+)(out). Its activity is regulated as follows. Channel activity is blocked by dihydropyridines (DHP), phenylalkylamines, and by benzothiazepines. In terms of biological role, pore-forming, alpha-1S subunit of the voltage-gated calcium channel that gives rise to L-type calcium currents in skeletal muscle. Calcium channels containing the alpha-1S subunit play an important role in excitation-contraction coupling in skeletal muscle via their interaction with RYR1, which triggers Ca(2+) release from the sarcplasmic reticulum and ultimately results in muscle contraction. Long-lasting (L-type) calcium channels belong to the 'high-voltage activated' (HVA) group. This is Voltage-dependent L-type calcium channel subunit alpha-1S (CACNA1S) from Oryctolagus cuniculus (Rabbit).